Here is a 126-residue protein sequence, read N- to C-terminus: MGFWKFPPFLVLSILVLYQAGMFHTAPMRSAFGSPFDPATLSEEESRLLLAAMVNDYEQMKAREMQKQRAQGSGISVQKRSCNTATCMTHRLVGLLSRSGSMVRSNLLPTKMGFKVFGGRRRNFWI.

An N-terminal signal peptide occupies residues 1–25 (MGFWKFPPFLVLSILVLYQAGMFHT). Positions 26 to 78 (APMRSAFGSPFDPATLSEEESRLLLAAMVNDYEQMKAREMQKQRAQGSGISVQ) are excised as a propeptide. Residues Cys-82 and Cys-87 are joined by a disulfide bond. Gly-118 carries the post-translational modification Glycine amide. The propeptide occupies 123 to 126 (NFWI).

Mainly expressed in the thyroid gland and CNS. Found in the nerve cells of cerebrum, hippocampus, hypothalamus, pons/midbrain and thalamus.

It is found in the secreted. Functionally, stimulates cAMP production in porcine kidney cell line LLC-PK1 via the calcitonin receptor (CT) but not via the CT-like (CL) receptor. This Sus scrofa (Pig) protein is Calcitonin receptor-stimulating peptide 1 (CRSP1).